The following is a 225-amino-acid chain: Peptidyl-tRNA hydrolase (225 aa).

Tyr-14 contacts tRNA. His-19 functions as the Proton acceptor in the catalytic mechanism. Phe-64, Asn-66, and Asn-112 together coordinate tRNA. The interval 184–225 (ALRMQPPKPEKPKPAAKAPEAQAPEAAPDERSALQKLADRFR) is disordered. A compositionally biased stretch (low complexity) spans 198–209 (AAKAPEAQAPEA). A compositionally biased stretch (basic and acidic residues) spans 211-225 (PDERSALQKLADRFR).

It belongs to the PTH family. As to quaternary structure, monomer.

It localises to the cytoplasm. It catalyses the reaction an N-acyl-L-alpha-aminoacyl-tRNA + H2O = an N-acyl-L-amino acid + a tRNA + H(+). In terms of biological role, hydrolyzes ribosome-free peptidyl-tRNAs (with 1 or more amino acids incorporated), which drop off the ribosome during protein synthesis, or as a result of ribosome stalling. Catalyzes the release of premature peptidyl moieties from peptidyl-tRNA molecules trapped in stalled 50S ribosomal subunits, and thus maintains levels of free tRNAs and 50S ribosomes. This is Peptidyl-tRNA hydrolase from Cereibacter sphaeroides (strain ATCC 17023 / DSM 158 / JCM 6121 / CCUG 31486 / LMG 2827 / NBRC 12203 / NCIMB 8253 / ATH 2.4.1.) (Rhodobacter sphaeroides).